We begin with the raw amino-acid sequence, 656 residues long: Choline transporter-like protein 3 (656 aa).

A helical transmembrane segment spans residues 37 to 57; sequence WLVLFFLFWTGLVFIMGYSVV. N141 and N154 each carry an N-linked (GlcNAc...) asparagine glycan. The next 5 membrane-spanning stretches (helical) occupy residues 216–236, 242–262, 288–308, 337–357, and 381–401; these read DTIL…LFAF, LLIH…CGVL, LAFA…IFTL, LWTC…LLSL, and YMWW…LACQ. N506 and N524 each carry an N-linked (GlcNAc...) asparagine glycan. Residues 537-557 traverse the membrane as a helical segment; the sequence is FVIFLGKVLVVCFSIFGGLMA. N-linked (GlcNAc...) asparagine glycosylation is present at N559. The helical transmembrane segment at 566-586 threads the bilayer; it reads VWAIPLLLVAFFACVVAHSFL. Residues 634-656 form a disordered region; sequence AKSQGQKDALPNEEGTELQPIVR.

The protein belongs to the CTL (choline transporter-like) family.

The protein localises to the membrane. This is Choline transporter-like protein 3 (Slc44a3) from Mus musculus (Mouse).